Consider the following 1078-residue polypeptide: Teashirt homolog 1-A (1078 aa).

Disordered regions lie at residues 1 to 110 (MPRR…NVSY), 140 to 197 (KSNE…SNSA), and 271 to 300 (GHYRDDNKDRDAERTKRWSKPRKRSLMEME). Residues 26–36 (IEEDNLEDDGL) show a composition bias toward acidic residues. Polar residues predominate over residues 57-71 (PSYQNSPISSATNQD). Low complexity predominate over residues 143 to 197 (ENSSPTTNTNKSSMSEATGSTSDPDTPTTIPSSSCTNTSTSISVTTSNSTNSNSA). 2 C2H2-type zinc fingers span residues 248–272 (FKCKDCSAAYDTLVELTVHMNETGH) and 309–333 (LKCMYCGHSFESLQDLSVHMIKTKH). Positions 271 to 286 (GHYRDDNKDRDAERTK) are enriched in basic and acidic residues. The segment at 365-394 (DSPEQAGISPGASVSESAKDPKAANPYVTP) is disordered. A C2H2-type 3 zinc finger spans residues 418–442 (LKCMECGSSHDSLQQLTAHMMVTGH). Disordered stretches follow at residues 472-524 (LPPT…ENED) and 850-877 (RLTPKSSTPSTVSEKSDADGSSFEEAMD). The span at 497-524 (HSEEKKDPEKEKVNNCEVEKRIKEENED) shows a compositional bias: basic and acidic residues. The span at 853 to 862 (PKSSTPSTVS) shows a compositional bias: polar residues. Positions 885–955 (RKGRQSNWNP…NVKYQLRRTG (71 aa)) form a DNA-binding region, homeobox. 2 consecutive C2H2-type zinc fingers follow at residues 970-992 (FFCNDCASQFRTASTYIGHLETH) and 1038-1061 (FQCKLCNRTFASKHAVKLHLSKTH).

The protein belongs to the teashirt C2H2-type zinc-finger protein family.

Its subcellular location is the nucleus. Probable transcriptional regulator involved in developmental processes. May act as a transcriptional repressor (Potential). Involved in two major neuronal regionalization processes: primary anteroposterior (AP) axis patterning of the CNS and segmentation of the cranial neuronal crest (CNS) development. The chain is Teashirt homolog 1-A (tshz1-a) from Xenopus laevis (African clawed frog).